The primary structure comprises 800 residues: Putative antiporter subunit mnhA2 (800 aa).

20 consecutive transmembrane segments (helical) span residues 1-21, 33-53, 78-98, 118-138, 167-187, 207-227, 241-261, 273-293, 300-320, 331-351, 387-407, 424-444, 472-492, 527-547, 595-615, 627-647, 651-671, 676-696, 712-732, and 768-788; these read MSLV…LLTS, IALT…PSVI, GLSL…FFYA, LFMF…MYVF, FMIT…LYIM, ALFI…SAQF, TPVS…FLLL, YIYI…ITAL, GILA…VGIG, IASI…NHAI, LVMM…GFLS, FSLI…IFTF, PWLF…IFFV, GFNI…VLAI, IIMT…RIGL, GPLE…LIFI, LTMV…FIAM, LALT…VSFS, IIKI…IFIA, and LDTL…YTLL.

It belongs to the CPA3 antiporters (TC 2.A.63) subunit A family. May form a heterooligomeric complex that consists of seven subunits: mnhA2, mnhB2, mnhC2, mnhD2, mnhE2, mnhF2 and mnhG2.

The protein resides in the cell membrane. The chain is Putative antiporter subunit mnhA2 (mnhA2) from Staphylococcus aureus (strain MRSA252).